Reading from the N-terminus, the 115-residue chain is NAD(P)H-quinone oxidoreductase subunit M (115 aa).

The protein belongs to the complex I NdhM subunit family. NDH-1 can be composed of about 15 different subunits; different subcomplexes with different compositions have been identified which probably have different functions.

The protein resides in the cellular thylakoid membrane. The enzyme catalyses a plastoquinone + NADH + (n+1) H(+)(in) = a plastoquinol + NAD(+) + n H(+)(out). It catalyses the reaction a plastoquinone + NADPH + (n+1) H(+)(in) = a plastoquinol + NADP(+) + n H(+)(out). Its function is as follows. NDH-1 shuttles electrons from an unknown electron donor, via FMN and iron-sulfur (Fe-S) centers, to quinones in the respiratory and/or the photosynthetic chain. The immediate electron acceptor for the enzyme in this species is believed to be plastoquinone. Couples the redox reaction to proton translocation, and thus conserves the redox energy in a proton gradient. Cyanobacterial NDH-1 also plays a role in inorganic carbon-concentration. The polypeptide is NAD(P)H-quinone oxidoreductase subunit M (Prochlorococcus marinus (strain MIT 9303)).